A 304-amino-acid chain; its full sequence is CD-NTase-associated protein 6 (304 aa).

ATP is bound at residue 75–80; the sequence is GTGKTS.

It belongs to the AAA ATPase family. As to quaternary structure, oligomerizes. Homohexamer. Forms a 1:1:6 CdnD:Cap7:Cap6 complex.

Regulates complex assembly in a CBASS antivirus system. CBASS (cyclic oligonucleotide-based antiphage signaling system) provides immunity against bacteriophage. The CD-NTase protein synthesizes cyclic nucleotides in response to infection; these serve as specific second messenger signals. The signals activate a diverse range of effectors, leading to bacterial cell death and thus abortive phage infection. A type III-C(AAA) CBASS system. Its function is as follows. Prevents the CdnD:Cap7:Cap8 complex (also called CdnD:HORMA2:HORMA3) from synthesizing 2',3',3'-cyclic AMP-AMP-AMP (cAAA). Binds and disassembles an active CdnD:Cap7:Cap8 complex, inhibiting the complex's ability to synthesize cyclic nucleotide second messengers. An AAA+-ATPase remodeler, in the absence of foreign threat Cap6 probably maintains the Cap7 protein in an open, inactive state. Once activated (presumably by a bacteriophage protein) Cap7 binds to and activates its cognate CD-NTase (CdnD in this bacteria) to synthesize cAAA, a cyclic nucleotide second messenger. cAAA activates the NucC endonuclease which degrades all DNA in the infected cell, causing cell death and abortive phage infection. The chain is CD-NTase-associated protein 6 from Pseudomonas aeruginosa.